The chain runs to 94 residues: Translation initiation factor 1A 2 (94 aa).

Positions 6–80 (GRRNLRMPND…EKANVEWRYS (75 aa)) constitute an S1-like domain.

The protein belongs to the eIF-1A family.

Seems to be required for maximal rate of protein biosynthesis. Enhances ribosome dissociation into subunits and stabilizes the binding of the initiator Met-tRNA(I) to 40 S ribosomal subunits. The sequence is that of Translation initiation factor 1A 2 (eIF1A2) from Halobacterium salinarum (strain ATCC 700922 / JCM 11081 / NRC-1) (Halobacterium halobium).